The following is a 535-amino-acid chain: Heparanase (535 aa).

The signal sequence occupies residues 1 to 27 (MLRLLLLWLWGPLGALAQGAPAGTAPT). Heparan sulfate group is bound by residues 54-56 (DAS) and Thr89. Residues 102–149 (PTSEERSYWKSQVNHDICRSEPVSAAVLRKLQVEWPFQELLLLREQYQ) constitute a propeptide, linker peptide. Cys119 and Cys171 form a disulfide bridge. 150-154 (KEFKN) lines the heparan sulfate group pocket. N-linked (GlcNAc...) asparagine glycans are attached at residues Asn192 and Asn209. Catalysis depends on Glu217, which acts as the Proton donor. Residues 262-272 (QPRGKTVKLLR), His288, and Arg295 each bind heparan sulfate group. The segment at 280–409 (EVIDSLTWHH…LLFKKLVGPR (130 aa)) is required for heterodimerization with the heparanase 8 kDa subunit. The active-site Nucleophile is Glu335. Heparan sulfate group-binding positions include 340 to 342 (YGG) and 381 to 383 (GNY). Cysteines 429 and 534 form a disulfide. Asn451 carries an N-linked (GlcNAc...) asparagine glycan. Residues 519-535 (FSYGFFVIRNAKIAACI) are required for transferring proheparanase to the Golgi apparatus, secretion and subsequent enzyme activity and for enhancement of PKB/AKT1 phosphorylation.

This sequence belongs to the glycosyl hydrolase 79 family. As to quaternary structure, heterodimer; heterodimer formation between the 8 kDa and the 50 kDa subunits is required for enzyme activity. Interacts with TF; the interaction, inhibited by heparin, enhances the generation of activated factor X and activates coagulation. Interacts with HRG; the interaction is enhanced at acidic pH, partially inhibits binding of HPSE to cell surface receptors and modulates its enzymatic activity. Interacts with SDC1; the interaction enhances the shedding of SDC1. Interacts with HPSE2. Proteolytically processed. The cleavage of the 65 kDa form leads to the generation of a linker peptide, and the 8 kDa and 50 kDa products. The active form, the 8/50 kDa heterodimer, is resistant to degradation. Complete removal of the linker peptide appears to be a prerequisite to the complete activation of the enzyme. In terms of processing, N-glycosylated. Glycosylation of the 50 kDa subunit appears to be essential for its solubility. As to expression, expressed in skin, mainly in the stratum granulosum and the first layer of the stratum corneum in the upper part of the epidermis. Also detected in hair follicles and in sebaceous glands.

It is found in the lysosome membrane. The protein localises to the secreted. The protein resides in the nucleus. It catalyses the reaction endohydrolysis of (1-&gt;4)-beta-D-glycosidic bonds of heparan sulfate chains in heparan sulfate proteoglycan.. Its activity is regulated as follows. Inhibited by EDTA and activated by calcium and magnesium. Inhibited by laminarin sulfate and, to a lower extent, by heparin and sulfamin. Functionally, endoglycosidase that cleaves heparan sulfate proteoglycans (HSPGs) into heparan sulfate side chains and core proteoglycans. Participates in extracellular matrix (ECM) degradation and remodeling. Selectively cleaves the linkage between a glucuronic acid unit and an N-sulfo glucosamine unit carrying either a 3-O-sulfo or a 6-O-sulfo group. Can also cleave the linkage between a glucuronic acid unit and an N-sulfo glucosamine unit carrying a 2-O-sulfo group, but not linkages between a glucuronic acid unit and a 2-O-sulfated iduronic acid moiety. It is essentially inactive at neutral pH but becomes active under acidic conditions such as during tumor invasion and in inflammatory processes. Facilitates cell migration associated with metastasis, wound healing and inflammation. Enhances shedding of syndecans, and increases endothelial invasion and angiogenesis in myelomas. Acts as a procoagulant by increasing the generation of activation factor X in the presence of tissue factor and activation factor VII. Increases cell adhesion to the extracellular matrix (ECM), independent of its enzymatic activity. Induces AKT1/PKB phosphorylation via lipid rafts increasing cell mobility and invasion. Heparin increases this AKT1/PKB activation. Regulates osteogenesis. Enhances angiogenesis through up-regulation of SRC-mediated activation of VEGF. Implicated in hair follicle inner root sheath differentiation and hair homeostasis. This is Heparanase (Hpse) from Mus musculus (Mouse).